The sequence spans 330 residues: tRNA pseudouridine synthase B (330 aa).

Residue Asp42 is the Nucleophile of the active site.

It belongs to the pseudouridine synthase TruB family. Type 1 subfamily.

The enzyme catalyses uridine(55) in tRNA = pseudouridine(55) in tRNA. Responsible for synthesis of pseudouridine from uracil-55 in the psi GC loop of transfer RNAs. The chain is tRNA pseudouridine synthase B from Lactococcus lactis subsp. cremoris (strain SK11).